The chain runs to 2324 residues: Serine/threonine-protein kinase MEC1 (2324 aa).

Residues 1349–1901 (VLAQKSLETN…LWYITVLLNS (553 aa)) enclose the FAT domain. The PI3K/PI4K catalytic domain maps to 2005–2308 (FTPHYKVYSS…QVDTVVQQAS (304 aa)). The G-loop stretch occupies residues 2011–2017 (VYSSLKK). Residues 2177 to 2185 (GLGDRHLEN) are catalytic loop. The segment at 2197–2221 (HVDFDCLFEKGKTLPVPEIVPFRLT) is activation loop. One can recognise an FATC domain in the interval 2292–2324 (LPLSVPGQVDTVVQQASSDENLAQMYIGWLPFW).

This sequence belongs to the PI3/PI4-kinase family. ATM subfamily.

It localises to the nucleus. The enzyme catalyses L-seryl-[protein] + ATP = O-phospho-L-seryl-[protein] + ADP + H(+). It carries out the reaction L-threonyl-[protein] + ATP = O-phospho-L-threonyl-[protein] + ADP + H(+). Functionally, serine/threonine protein kinase which activates checkpoint signaling upon genotoxic stresses such as ionizing radiation (IR), ultraviolet light (UV), or DNA replication stalling, thereby acting as a DNA damage sensor. Recognizes the substrate consensus sequence [ST]-Q. Recruited to DNA lesions in order to initiate the DNA repair by homologous recombination. Phosphorylates histone H2A to form H2AS128ph (gamma-H2A) at sites of DNA damage, also involved in the regulation of DNA damage response mechanism. Required for cell growth and meiotic recombination. The polypeptide is Serine/threonine-protein kinase MEC1 (MEC1) (Eremothecium gossypii (strain ATCC 10895 / CBS 109.51 / FGSC 9923 / NRRL Y-1056) (Yeast)).